We begin with the raw amino-acid sequence, 269 residues long: SF-assemblin (269 aa).

Residues 1–23 (MSISPGRSFSPMRASGLTGITSA) form a disordered region. The nonhelical region stretch occupies residues 1–24 (MSISPGRSFSPMRASGLTGITSAG). The tract at residues 25 to 269 (PTAKLEHVSE…LQEGLKLVST (245 aa)) is rod. A coiled-coil region spans residues 98–144 (AERSAAQHVDMQNSLKQAVDSLSNRLQDLHSLVREEREQRRNDIEHL).

The protein belongs to the SF-assemblin family.

Its subcellular location is the cytoplasm. The protein localises to the cytoskeleton. Functionally, major component of the striated microtubule-associated fibers (SMAFs; system-I-fibers). This Chlamydomonas moewusii (Chlamydomonas eugametos) protein is SF-assemblin.